The sequence spans 3674 residues: Spectrin beta chain, non-erythrocytic 5 (3674 aa).

Positions 1–37 (MAGQPHSPRELLGAAGHRSRRPSTELRVPPSPSLTMD) are disordered. An actin-binding region spans residues 1 to 279 (MAGQPHSPRE…IMTYVSLYYH (279 aa)). 2 Calponin-homology (CH) domains span residues 54–159 (QMQE…LRFQ) and 177–282 (LSTK…HYCS). 8 Spectrin repeats span residues 307-416 (LQTQ…ALQQ), 428-529 (ARRF…RKQV), 642-742 (AEFL…ARLQ), 747-810 (VLQY…QGRA), 900-996 (GFCS…AVQL), 1103-1206 (ARQS…WLQE), 1209-1311 (ELQK…RQLL), and 1315-1417 (QLQE…ELQQ). The tract at residues 1441 to 1469 (ALQSSETGQDLRSSQRLQKRHQQLESESR) is disordered. A compositionally biased stretch (polar residues) spans 1442-1456 (LQSSETGQDLRSSQR). Spectrin repeat units follow at residues 1521-1624 (ELHQ…CLQQ), 1628-1727 (FQQY…RELE), 1731-1835 (RLHE…ALRD), 1842-1940 (VHRD…AQLE), 1944-2046 (LLAR…ERLQ), 2052-2146 (QLFL…HALH), 2150-2253 (LMAS…ELED), 2256-2361 (NFLE…QQLE), 2366-2467 (IHVL…EALD), 2471-2574 (QAQK…QLQQ), 2577-2680 (ELQL…RLEE), 2683-2784 (QLQA…AKLQ), 2791-2890 (RLRR…TALE), 2894-2997 (LLLK…LLQQ), 3000-3103 (EAQQ…GLQE), 3106-3209 (QLHQ…ENLA), 3213-3311 (EVHS…QWLA), 3318-3415 (AFLG…RWQR), and 3422-3488 (LQKL…EQEL). The 109-residue stretch at 3533–3641 (TPTMEGSLEF…WWRALGSTAA (109 aa)) folds into the PH domain.

Belongs to the spectrin family. As to quaternary structure, probably associates with an alpha chain. Interacts (via C-terminus) with TRPC4. In terms of tissue distribution, expressed at very low levels in many tissues, with strongest expression in cerebellum, spinal cord, stomach, pituitary gland, liver, pancreas, salivary gland, kidney, bladder, and heart.

The protein resides in the cytoplasm. It is found in the cytoskeleton. In Homo sapiens (Human), this protein is Spectrin beta chain, non-erythrocytic 5 (SPTBN5).